The following is a 1187-amino-acid chain: Protein WWC2 (1187 aa).

2 WW domains span residues 10-43 (LPLP…DPRD) and 57-90 (DELP…DPRK). Coiled coils occupy residues 121-194 (KEQR…YKQQ) and 224-256 (ELKS…FHLD). S286 is modified (phosphoserine). A coiled-coil region spans residues 302–423 (LAEKVRLSLQ…EETTKLTTSL (122 aa)). The tract at residues 438-464 (SSGSSLGSLASSRGSLNTSSRGSLNSL) is disordered. One can recognise a C2 domain in the interval 697-820 (ETAQVQIGLR…FSNEIFMLWY (124 aa)). Disordered stretches follow at residues 830 to 849 (CKKN…QPML) and 874 to 963 (ELAQ…ETNT). Positions 859–885 (ALLARTSAELLAVEQELAQEEEEEELR) form a coiled coil. Acidic residues predominate over residues 875–884 (LAQEEEEEEL). Residue T999 is modified to Phosphothreonine. Position 1017 is a phosphoserine (S1017). Residues 1026–1045 (SLFVRNSTERRSLRVKRAVC) form an interaction with PRKCZ region. Residues 1063 to 1143 (DLELDLQASL…DLNAERLMRQ (81 aa)) adopt a coiled-coil conformation.

The protein belongs to the WWC family. Forms homodimers and heterodimers with WWC1 and WWC3. Interacts with DLC1 and PRKCZ. Interacts (via WW domains) with LATS1 and LATS2.

The protein resides in the cytoplasm. It is found in the cytosol. Its function is as follows. Regulator of the Hippo signaling pathway, also known as the Salvador-Warts-Hippo (SWH) pathway. Enhances phosphorylation of LATS1 and YAP1 and negatively regulates cell proliferation and organ growth due to a suppression of the transcriptional activity of YAP1, the major effector of the Hippo pathway. The sequence is that of Protein WWC2 (Wwc2) from Mus musculus (Mouse).